The chain runs to 250 residues: N-acyl homoserine lactonase (250 aa).

His-104, His-106, Asp-108, His-109, His-169, Asp-191, and His-235 together coordinate Zn(2+).

This sequence belongs to the metallo-beta-lactamase superfamily. Monomer. Zn(2+) is required as a cofactor.

The enzyme catalyses an N-acyl-L-homoserine lactone + H2O = an N-acyl-L-homoserine + H(+). This chain is N-acyl homoserine lactonase, found in Bacillus cereus.